A 255-amino-acid polypeptide reads, in one-letter code: Small ribosomal subunit protein uS2 (255 aa).

It belongs to the universal ribosomal protein uS2 family.

This chain is Small ribosomal subunit protein uS2, found in Streptococcus thermophilus (strain ATCC BAA-491 / LMD-9).